The following is a 78-amino-acid chain: Alpha-neurotoxin homolog 1 (78 aa).

An N-terminal signal peptide occupies residues 1-21 (MKTLLLTLVVVTIVCLDFGYT). 4 disulfides stabilise this stretch: cysteine 24–cysteine 42, cysteine 37–cysteine 57, cysteine 59–cysteine 70, and cysteine 71–cysteine 76.

It belongs to the three-finger toxin family. Short-chain subfamily. Orphan group XII sub-subfamily. In terms of tissue distribution, expressed by the venom gland.

It is found in the secreted. In Micrurus corallinus (Brazilian coral snake), this protein is Alpha-neurotoxin homolog 1.